The chain runs to 687 residues: Pre-mRNA-splicing factor CLF1 (687 aa).

13 HAT repeats span residues 45-77 (EYQR…FEIE), 79-111 (HDMR…AELK), 113-145 (KCIN…VEES), 147-178 (NNVE…FEIR), 180-211 (KNWN…FENR), 213-247 (GNTE…AKLV), 251-283 (AHWE…LKAG), 300-332 (TISY…LISE), 337-369 (QIMQ…LWMR), 383-416 (LEEE…FLIR), 451-483 (KEFD…LEEN), 525-557 (QEFE…YQTS), and 629-661 (LDQE…YIFP).

It belongs to the crooked-neck family. In terms of assembly, belongs to the NTC complex (or PRP19-associated complex), composed of at least CEF1, CLF1, ISY1, NTC20, SNT309, SYF1, SYF2, and PRP19. The NTC complex associates with the spliceosome after the release of the U1 and U4 snRNAs and forms the CWC spliceosome subcomplex (or CEF1-associated complex) reminiscent of a late-stage spliceosome composed also of the U2, U5 and U6 snRNAs and at least BUD13, BUD31, BRR2, CDC40, CUS1, CWC2, CWC15, CWC21, CWC22, CWC23, CWC24, CWC25, CWC27, ECM2, HSH155, IST3, LEA1, MSL1, PRP8, PRP9, PRP11, PRP21, PRP22, PRP45, PRP46, SLU7, SMB1, SMD1, SMD2, SMD3, SMX2, SMX3, SNU114, SPP2, RSE1 and YJU2. Interacts with CEF1, ISY1, MUD2, NTC20, PRP22, PRP40, PRP46, SYF1, SYF2, and the ORC2 subunit of the origin recognition complex.

The protein localises to the nucleus. Involved in pre-mRNA splicing and cell cycle progression. Required for the spliceosome assembly by promoting the functional integration of the U4/U6.U5 tri-snRNP particle into the U1-, U2-dependent pre-spliceosome. Also recruits PRP19 to the spliceosome, as a component of the NTC complex (or PRP19-associated complex). The association of the NTC complex to the spliceosome mediates conformational rearrangement or stabilizes the structure of the spliceosome after U4 snRNA dissociation, which leads to spliceosome maturation. Required for initiation of the DNA replication by binding the RNA replication origins, probably through its interaction with the origin recognition complex (ORC). The chain is Pre-mRNA-splicing factor CLF1 (CLF1) from Saccharomyces cerevisiae (strain ATCC 204508 / S288c) (Baker's yeast).